The following is a 205-amino-acid chain: N-(5'-phosphoribosyl)anthranilate isomerase (205 aa).

This sequence belongs to the TrpF family.

The enzyme catalyses N-(5-phospho-beta-D-ribosyl)anthranilate = 1-(2-carboxyphenylamino)-1-deoxy-D-ribulose 5-phosphate. Its pathway is amino-acid biosynthesis; L-tryptophan biosynthesis; L-tryptophan from chorismate: step 3/5. The chain is N-(5'-phosphoribosyl)anthranilate isomerase from Maridesulfovibrio salexigens (strain ATCC 14822 / DSM 2638 / NCIMB 8403 / VKM B-1763) (Desulfovibrio salexigens).